A 696-amino-acid chain; its full sequence is DNA ligase (696 aa).

NAD(+) contacts are provided by residues 36–40 (DAEYD), 85–86 (SL), and Glu-123. Residue Lys-125 is the N6-AMP-lysine intermediate of the active site. Positions 146, 181, 319, and 343 each coordinate NAD(+). The Zn(2+) site is built by Cys-437, Cys-440, Cys-455, and Cys-461. The BRCT domain maps to 618–696 (PEGTSLAGKT…EDGLKALLGL (79 aa)).

It belongs to the NAD-dependent DNA ligase family. LigA subfamily. Mg(2+) serves as cofactor. Requires Mn(2+) as cofactor.

The catalysed reaction is NAD(+) + (deoxyribonucleotide)n-3'-hydroxyl + 5'-phospho-(deoxyribonucleotide)m = (deoxyribonucleotide)n+m + AMP + beta-nicotinamide D-nucleotide.. Its function is as follows. DNA ligase that catalyzes the formation of phosphodiester linkages between 5'-phosphoryl and 3'-hydroxyl groups in double-stranded DNA using NAD as a coenzyme and as the energy source for the reaction. It is essential for DNA replication and repair of damaged DNA. This Bordetella pertussis (strain Tohama I / ATCC BAA-589 / NCTC 13251) protein is DNA ligase.